Consider the following 742-residue polypeptide: Cullin-2 (742 aa).

The 63-residue stretch at 672–734 (DRRYAIDAAL…RDYLERDTDN (63 aa)) folds into the Cullin neddylation domain. Lysine 686 is covalently cross-linked (Glycyl lysine isopeptide (Lys-Gly) (interchain with G-Cter in NEDD8)).

This sequence belongs to the cullin family. As to quaternary structure, interacts with SKIP17 and FBW2/SKIP18. Post-translationally, neddylated; which enhances the ubiquitination activity of E3 ubiquitin-protein ligase complexes.

Functionally, core component of multiple SCF (SKP1-CUL1-F-box protein) E3 ubiquitin-protein ligase complexes. Involved in ubiquitination and subsequent proteasomal degradation of target proteins. This is Cullin-2 (CUL2) from Arabidopsis thaliana (Mouse-ear cress).